We begin with the raw amino-acid sequence, 230 residues long: Ureidoacrylate amidohydrolase RutB (230 aa).

D24 serves as the catalytic Proton acceptor. K133 is a catalytic residue. The active-site Nucleophile is C166.

It belongs to the isochorismatase family. RutB subfamily.

The enzyme catalyses (Z)-3-ureidoacrylate + H2O + H(+) = (Z)-3-aminoacrylate + NH4(+) + CO2. It catalyses the reaction (Z)-3-ureidoacrylate + H2O = (Z)-3-aminoacrylate + carbamate + H(+). It carries out the reaction (Z)-2-methylureidoacrylate + H2O + H(+) = (Z)-2-methylaminoacrylate + NH4(+) + CO2. Functionally, hydrolyzes ureidoacrylate to form aminoacrylate and carbamate. The carbamate hydrolyzes spontaneously, thereby releasing one of the nitrogen atoms of the pyrimidine ring as ammonia and one of its carbon atoms as CO2. This Escherichia coli O111:H- (strain 11128 / EHEC) protein is Ureidoacrylate amidohydrolase RutB.